A 735-amino-acid polypeptide reads, in one-letter code: NAD(P)H-quinone oxidoreductase subunit 5, chloroplastic (735 aa).

The next 16 helical transmembrane spans lie at 9–29, 40–60, 89–109, 125–145, 147–167, 184–204, 219–239, 258–278, 280–300, 327–347, 354–374, 396–416, 425–445, 540–560, 600–620, and 714–734; these read WIIP…LLLF, WAFP…DLSI, IDSL…FVLI, FAYM…CNLI, IYIF…FWFT, IGDF…GSFE, NEVH…GAVA, TPIS…FLVA, LLPL…IGII, LGYM…FHLI, ALLF…VGYS, IAFL…CFWS, WLYS…TAFY, LFPM…AIPF, FSVS…KPFY, and FYLL…YFIL.

This sequence belongs to the complex I subunit 5 family. NDH is composed of at least 16 different subunits, 5 of which are encoded in the nucleus.

Its subcellular location is the plastid. The protein localises to the chloroplast thylakoid membrane. It carries out the reaction a plastoquinone + NADH + (n+1) H(+)(in) = a plastoquinol + NAD(+) + n H(+)(out). It catalyses the reaction a plastoquinone + NADPH + (n+1) H(+)(in) = a plastoquinol + NADP(+) + n H(+)(out). NDH shuttles electrons from NAD(P)H:plastoquinone, via FMN and iron-sulfur (Fe-S) centers, to quinones in the photosynthetic chain and possibly in a chloroplast respiratory chain. The immediate electron acceptor for the enzyme in this species is believed to be plastoquinone. Couples the redox reaction to proton translocation, and thus conserves the redox energy in a proton gradient. In Gossypium hirsutum (Upland cotton), this protein is NAD(P)H-quinone oxidoreductase subunit 5, chloroplastic (ndhF).